The sequence spans 730 residues: Wall-associated receptor kinase-like 1 (730 aa).

The N-terminal stretch at 1-25 is a signal peptide; that stretch reads MKTKTSIFQFIVASVLTLLINDSSA. Residues 26 to 358 lie on the Extracellular side of the membrane; it reads ATPPPPISNS…KPTKPPVLQG (333 aa). 11 N-linked (GlcNAc...) asparagine glycosylation sites follow: asparagine 34, asparagine 40, asparagine 70, asparagine 77, asparagine 92, asparagine 119, asparagine 132, asparagine 211, asparagine 233, asparagine 269, and asparagine 281. Positions 282-341 are atypical EGF-like; that stretch reads CSCEYDYFSGMSYRNCYCDYGYTGNPYLRGGCVDTDSCEGNHNCGEDAHCVNMPGPMSMC. Disulfide bonds link cysteine 284-cysteine 297, cysteine 319-cysteine 331, and cysteine 325-cysteine 341. A helical membrane pass occupies residues 359 to 379; it reads ILIGLSGLVFFVGLFWLFKLI. Over 380–730 the chain is Cytoplasmic; it reads KKRRNINRSK…DQPMAINNKR (351 aa). The Protein kinase domain maps to 429–702; it reads FSIDRVLGQG…KEVSNELERI (274 aa). ATP is bound by residues 435–443 and lysine 457; that span reads LGQGGQGTV. A Phosphotyrosine modification is found at tyrosine 502. Aspartate 554 functions as the Proton acceptor in the catalytic mechanism. Phosphothreonine is present on residues threonine 588 and threonine 593. Residue tyrosine 601 is modified to Phosphotyrosine. The interval 685–730 is disordered; it reads KGKNRPNMKEVSNELERIRSSPEDLDVRTENEDEEEDQPMAINNKR. Basic and acidic residues predominate over residues 691 to 714; that stretch reads NMKEVSNELERIRSSPEDLDVRTE.

The protein belongs to the protein kinase superfamily. Ser/Thr protein kinase family. As to expression, preferentially expressed in roots and flowers.

The protein localises to the membrane. The enzyme catalyses L-seryl-[protein] + ATP = O-phospho-L-seryl-[protein] + ADP + H(+). It carries out the reaction L-threonyl-[protein] + ATP = O-phospho-L-threonyl-[protein] + ADP + H(+). Serine/threonine-protein kinase that may function as a signaling receptor of extracellular matrix component. The chain is Wall-associated receptor kinase-like 1 (WAKL1) from Arabidopsis thaliana (Mouse-ear cress).